Reading from the N-terminus, the 216-residue chain is Trimethylamine corrinoid protein 1 (216 aa).

The B12-binding N-terminal domain occupies 1–92 (MASKEEIIAK…EMEKRKSETK (92 aa)). The B12-binding domain occupies 94–216 (LGTVVIGTIE…VVSKVRAVLL (123 aa)). Residue histidine 107 participates in methylcob(III)alamin binding.

Belongs to the methylamine corrinoid protein family. Can form a complex with MttB.

It participates in one-carbon metabolism; methanogenesis from trimethylamine. Acts probably as a methyl group carrier between MttB and either MtbA or MtaA. This Methanosarcina acetivorans (strain ATCC 35395 / DSM 2834 / JCM 12185 / C2A) protein is Trimethylamine corrinoid protein 1 (mttC1).